A 225-amino-acid chain; its full sequence is 7-cyano-7-deazaguanine synthase (225 aa).

9 to 19 (YSGGLDSTTCL) is an ATP binding site. 4 residues coordinate Zn(2+): C188, C198, C201, and C204.

This sequence belongs to the QueC family. Zn(2+) is required as a cofactor.

It catalyses the reaction 7-carboxy-7-deazaguanine + NH4(+) + ATP = 7-cyano-7-deazaguanine + ADP + phosphate + H2O + H(+). Its pathway is purine metabolism; 7-cyano-7-deazaguanine biosynthesis. Its function is as follows. Catalyzes the ATP-dependent conversion of 7-carboxy-7-deazaguanine (CDG) to 7-cyano-7-deazaguanine (preQ(0)). The polypeptide is 7-cyano-7-deazaguanine synthase (Citrifermentans bemidjiense (strain ATCC BAA-1014 / DSM 16622 / JCM 12645 / Bem) (Geobacter bemidjiensis)).